Here is a 1032-residue protein sequence, read N- to C-terminus: Phosphoenolpyruvate carboxylase 4 (1032 aa).

H154 is a catalytic residue. Positions 377–407 (PNLQKQNEQDFSESDWEKIDNGSRSGLTSRG) are disordered. Positions 398-407 (GSRSGLTSRG) are enriched in polar residues. K699 is an active-site residue.

Belongs to the PEPCase type 1 family. Homotetramer. It depends on Mg(2+) as a cofactor. Expressed at low levels in flowers and siliques, and detectable in roots.

Its subcellular location is the cytoplasm. The enzyme catalyses oxaloacetate + phosphate = phosphoenolpyruvate + hydrogencarbonate. Its function is as follows. Through the carboxylation of phosphoenolpyruvate (PEP) it forms oxaloacetate, a four-carbon dicarboxylic acid source for the tricarboxylic acid cycle. This Arabidopsis thaliana (Mouse-ear cress) protein is Phosphoenolpyruvate carboxylase 4 (PPC4).